The primary structure comprises 143 residues: MAPKKKVTGLIKLQINAGAANPAPPIGPALGQHGVNIMEFCKAYNAATESQRGNVIPVEITVYEDRSFTFVLKTPPAAELIKKAAGVAKGSGVPHTTKVGKLTQEQVRAIAEQKMVDLNANDIDAASKIIAGTARSMGITVEA.

Belongs to the universal ribosomal protein uL11 family. As to quaternary structure, part of the ribosomal stalk of the 50S ribosomal subunit. Interacts with L10 and the large rRNA to form the base of the stalk. L10 forms an elongated spine to which L12 dimers bind in a sequential fashion forming a multimeric L10(L12)X complex. In terms of processing, one or more lysine residues are methylated.

In terms of biological role, forms part of the ribosomal stalk which helps the ribosome interact with GTP-bound translation factors. This Leifsonia xyli subsp. xyli (strain CTCB07) protein is Large ribosomal subunit protein uL11.